The primary structure comprises 238 residues: Large ribosomal subunit protein uL5c (238 aa).

The protein belongs to the universal ribosomal protein uL5 family. In terms of assembly, part of the 50S ribosomal subunit; contacts the 5S rRNA.

The protein resides in the plastid. The protein localises to the chloroplast. Binds 5S rRNA, forms part of the central protuberance of the 50S subunit. The sequence is that of Large ribosomal subunit protein uL5c (rpl5) from Phaeodactylum tricornutum (strain CCAP 1055/1).